Consider the following 259-residue polypeptide: Hydroxyacylglutathione hydrolase (259 aa).

His-56, His-58, Asp-60, His-61, His-112, Asp-133, and His-171 together coordinate Zn(2+).

It belongs to the metallo-beta-lactamase superfamily. Glyoxalase II family. In terms of assembly, monomer. The cofactor is Zn(2+).

It catalyses the reaction an S-(2-hydroxyacyl)glutathione + H2O = a 2-hydroxy carboxylate + glutathione + H(+). It functions in the pathway secondary metabolite metabolism; methylglyoxal degradation; (R)-lactate from methylglyoxal: step 2/2. In terms of biological role, thiolesterase that catalyzes the hydrolysis of S-D-lactoyl-glutathione to form glutathione and D-lactic acid. The sequence is that of Hydroxyacylglutathione hydrolase from Pseudomonas putida (strain ATCC 700007 / DSM 6899 / JCM 31910 / BCRC 17059 / LMG 24140 / F1).